Reading from the N-terminus, the 132-residue chain is Histone H2A.1 (132 aa).

Belongs to the histone H2A family. The nucleosome is a histone octamer containing two molecules each of H2A, H2B, H3 and H4 assembled in one H3-H4 heterotetramer and two H2A-H2B heterodimers. The octamer wraps approximately 147 bp of DNA.

It localises to the nucleus. It is found in the chromosome. Its function is as follows. Core component of nucleosome. Nucleosomes wrap and compact DNA into chromatin, limiting DNA accessibility to the cellular machineries which require DNA as a template. Histones thereby play a central role in transcription regulation, DNA repair, DNA replication and chromosomal stability. DNA accessibility is regulated via a complex set of post-translational modifications of histones, also called histone code, and nucleosome remodeling. This is Histone H2A.1 from Leishmania infantum.